The sequence spans 199 residues: Holliday junction branch migration complex subunit RuvA (199 aa).

The tract at residues 1-64 (MIAFLKGAVF…ENEFKLFGFL (64 aa)) is domain I. The segment at 65–143 (DQDELRLFKT…ELKLVEVEKE (79 aa)) is domain II. Residues 144-148 (QRPLL) form a flexible linker region. The tract at residues 148 to 199 (LDELMEALEILGYSRSEVLPAIMDLNRNKQLGNIVEENIKLVLKAKAQEMRR) is domain III.

This sequence belongs to the RuvA family. In terms of assembly, homotetramer. Forms an RuvA(8)-RuvB(12)-Holliday junction (HJ) complex. HJ DNA is sandwiched between 2 RuvA tetramers; dsDNA enters through RuvA and exits via RuvB. An RuvB hexamer assembles on each DNA strand where it exits the tetramer. Each RuvB hexamer is contacted by two RuvA subunits (via domain III) on 2 adjacent RuvB subunits; this complex drives branch migration. In the full resolvosome a probable DNA-RuvA(4)-RuvB(12)-RuvC(2) complex forms which resolves the HJ.

The protein localises to the cytoplasm. Its function is as follows. The RuvA-RuvB-RuvC complex processes Holliday junction (HJ) DNA during genetic recombination and DNA repair, while the RuvA-RuvB complex plays an important role in the rescue of blocked DNA replication forks via replication fork reversal (RFR). RuvA specifically binds to HJ cruciform DNA, conferring on it an open structure. The RuvB hexamer acts as an ATP-dependent pump, pulling dsDNA into and through the RuvAB complex. HJ branch migration allows RuvC to scan DNA until it finds its consensus sequence, where it cleaves and resolves the cruciform DNA. This is Holliday junction branch migration complex subunit RuvA from Syntrophomonas wolfei subsp. wolfei (strain DSM 2245B / Goettingen).